Consider the following 1210-residue polypeptide: Ice nucleation protein (1210 aa).

The tract at residues 165–1156 is octapeptide periodicity; that stretch reads AVYGSTLTGA…LSGGENSTLI (992 aa).

Belongs to the bacterial ice nucleation protein family.

The protein localises to the cell outer membrane. Ice nucleation proteins enable bacteria to nucleate crystallization in supercooled water. This is Ice nucleation protein (inaW) from Pseudomonas fluorescens.